Here is a 232-residue protein sequence, read N- to C-terminus: Ribonuclease 3 (232 aa).

One can recognise an RNase III domain in the interval lysine 5 to glycine 134. Glutamate 47 contributes to the Mg(2+) binding site. Residue aspartate 51 is part of the active site. Residues aspartate 120 and glutamate 123 each contribute to the Mg(2+) site. Residue glutamate 123 is part of the active site. Residues aspartate 160–serine 229 form the DRBM domain. Residues lysine 203 to phenylalanine 232 are disordered. Residues lysine 213–phenylalanine 232 show a composition bias toward basic and acidic residues.

The protein belongs to the ribonuclease III family. In terms of assembly, homodimer. The cofactor is Mg(2+).

It localises to the cytoplasm. It catalyses the reaction Endonucleolytic cleavage to 5'-phosphomonoester.. Its function is as follows. Digests double-stranded RNA. Involved in the processing of primary rRNA transcript to yield the immediate precursors to the large and small rRNAs (23S and 16S). Processes some mRNAs, and tRNAs when they are encoded in the rRNA operon. Processes pre-crRNA and tracrRNA of type II CRISPR loci if present in the organism. The chain is Ribonuclease 3 from Streptococcus sanguinis (strain SK36).